A 758-amino-acid chain; its full sequence is Microtubule-associated protein tau (758 aa).

The span at 1-26 (MAEPRQEFEVMEDHAGTYGLGDRKDQ) shows a compositional bias: basic and acidic residues. The disordered stretch occupies residues 1–573 (MAEPRQEFEV…PVPMPDLKNV (573 aa)). Position 2 is an N-acetylalanine (Ala-2). Residue Tyr-18 is modified to Phosphotyrosine; by FYN. Tyr-29 carries the phosphotyrosine modification. Residue Lys-44 forms a Glycyl lysine isopeptide (Lys-Gly) (interchain with G-Cter in ubiquitin) linkage. Phosphoserine occurs at positions 46 and 61. Polar residues predominate over residues 61-71 (SETSDAKSTPT). Residues Thr-69 and Thr-71 each carry the phosphothreonine modification. An N-linked (Glc) (glycation) lysine; in PHF-tau; in vitro glycan is attached at Lys-87. Thr-111 is subject to Phosphothreonine. Basic and acidic residues-rich tracts occupy residues 179 to 189 (EGGRHAPELLK) and 207 to 216 (GGKERPGSKE). Ser-214 is modified (phosphoserine; by SGK1). Positions 217–228 (EVDEDRDVDESS) are enriched in acidic residues. Basic and acidic residues predominate over residues 314 to 323 (EQAHSEEHLG). Positions 324–340 (RAAFPGAPGEGPEARGP) are enriched in low complexity. Basic and acidic residues-rich tracts occupy residues 344 to 356 (EDTK…EPSE) and 381 to 393 (KSKD…DKKA). N-linked (Glc) (glycation) lysine; in PHF-tau; in vitro glycosylation is present at Lys-383. Positions 442–453 (VSSVTSRTGSSG) are enriched in low complexity. Over residues 455 to 466 (KEMKLKGADGKT) the composition is skewed to basic and acidic residues. A glycan (N-linked (Glc) (glycation) lysine; in PHF-tau; in vitro) is linked at Lys-467. At Thr-470 the chain carries Phosphothreonine; by PDPK1. Arg-472 bears the Omega-N-methylarginine mark. An N-linked (Glc) (glycation) lysine; in PHF-tau; in vitro glycan is attached at Lys-480. Lys-480 is subject to N6,N6-dimethyllysine; alternate. Position 480 is an N6-acetyllysine; alternate (Lys-480). Deamidated asparagine; in tau and PHF-tau; partial is present on Asn-484. Residue Thr-486 is modified to Phosphothreonine. The N-linked (Glc) (glycation) lysine; in PHF-tau; in vitro glycan is linked to Lys-491. Residues 491-503 (KTPPAPKTPPSSG) show a composition bias toward pro residues. Thr-492 carries the post-translational modification Phosphothreonine. A Phosphothreonine; by PDPK1 modification is found at Thr-498. Ser-502, Ser-508, and Ser-512 each carry phosphoserine. A compositionally biased stretch (low complexity) spans 504–531 (EPPKSGDRSGYSSPGSPGTPGSRSRTPS). Tyr-514 bears the Phosphotyrosine; by TTBK1 mark. Ser-515 and Ser-516 each carry phosphoserine; by PDPK1 and TTBK1. Ser-519 carries the phosphoserine; by CK1, PDPK1 and TTBK1 modification. At Thr-522 the chain carries Phosphothreonine; by CK1 and PDPK1. Residue Ser-525 is glycosylated (O-linked (GlcNAc) serine). Thr-529 is subject to Phosphothreonine; by BRSK1, BRSK2, DYRK2 and PDPK1. Position 531 is a phosphoserine; by PKA (Ser-531). Thr-534 carries the post-translational modification Phosphothreonine; by PDPK1. Lys-542 carries N-linked (Glc) (glycation) lysine; in PHF-tau; in vitro glycosylation. Residue Lys-542 is modified to N6-acetyllysine. The residue at position 548 (Thr-548) is a Phosphothreonine; by GSK3-beta and PDPK1. A glycan (N-linked (Glc) (glycation) lysine; in PHF-tau; in vitro) is linked at Lys-551. A Phosphoserine; by PDPK1 modification is found at Ser-552. Residue Ser-554 is modified to Phosphoserine; by PHK. O-linked (GlcNAc) serine glycosylation occurs at Ser-555. Tau/MAP repeat units follow at residues 561–591 (QTAP…GGGK), 592–622 (VQII…GGGS), 623–653 (VQIV…GGGQ), and 654–685 (VEVK…GGGN). Residues 561 to 685 (QTAPVPMPDL…NITHVPGGGN (125 aa)) form a microtubule-binding domain region. Residue Lys-571 forms a Glycyl lysine isopeptide (Lys-Gly) (interchain with G-Cter in ubiquitin); in PHF-tau linkage. Lys-576 is a glycosylation site (N-linked (Glc) (glycation) lysine; in PHF-tau; in vitro). Lys-576 carries the N6-acetyllysine; alternate modification. Lys-576 bears the N6-methyllysine; alternate mark. Residue Lys-576 forms a Glycyl lysine isopeptide (Lys-Gly) (interchain with G-Cter in ubiquitin); alternate linkage. Ser-579 carries the phosphoserine; by MARK1, MARK2, MARK3, MARK4, BRSK1, BRSK2 and PHK modification. Lys-584 participates in a covalent cross-link: Glycyl lysine isopeptide (Lys-Gly) (interchain with G-Cter in ubiquitin). Asn-596 carries the deamidated asparagine; in tau and PHF-tau; partial modification. 2 N-linked (Glc) (glycation) lysine; in PHF-tau; in vitro glycosylation sites follow: Lys-597 and Lys-598. An N6-acetyllysine; alternate modification is found at Lys-598. A Glycyl lysine isopeptide (Lys-Gly) (interchain with G-Cter in ubiquitin); alternate cross-link involves residue Lys-598. Ser-602 is subject to Phosphoserine; by PHK. At Lys-607 the chain carries N6-acetyllysine. An intrachain disulfide couples Cys-608 to Cys-639. Phosphoserine is present on Ser-610. At Lys-615 the chain carries N6-acetyllysine; alternate. Lys-615 participates in a covalent cross-link: Glycyl lysine isopeptide (Lys-Gly) (interchain with G-Cter in ubiquitin); alternate. Ser-622 is modified (phosphoserine; by PHK). An N6,N6-dimethyllysine; alternate modification is found at Lys-628. 3 positions are modified to N6-acetyllysine; alternate: Lys-628, Lys-634, and Lys-638. Lys-628 is covalently cross-linked (Glycyl lysine isopeptide (Lys-Gly) (interchain with G-Cter in ubiquitin); in PHF-tau). Residues Lys-634 and Lys-638 each participate in a glycyl lysine isopeptide (Lys-Gly) (interchain with G-Cter in ubiquitin); alternate cross-link. Ser-641 is subject to Phosphoserine. Residues Lys-648, Lys-660, and Lys-664 each carry the N6-acetyllysine; alternate modification. Glycyl lysine isopeptide (Lys-Gly) (interchain with G-Cter in ubiquitin); alternate cross-links involve residues Lys-648, Lys-660, and Lys-664. The N-linked (Glc) (glycation) lysine; in PHF-tau; in vitro glycan is linked to Lys-664. At Arg-666 the chain carries Omega-N-methylarginine. Ser-669 is subject to Phosphoserine; by PHK. Lys-670 carries an N-linked (Glc) (glycation) lysine; in PHF-tau; in vitro glycan. Lys-670 is covalently cross-linked (Glycyl lysine isopeptide (Lys-Gly) (interchain with G-Cter in ubiquitin); in PHF-tau). Ser-673 carries the phosphoserine modification. N-linked (Glc) (glycation) lysine; in PHF-tau; in vitro glycosylation is present at Lys-686. The residue at position 686 (Lys-686) is an N6-acetyllysine; alternate. Lys-686 participates in a covalent cross-link: Glycyl lysine isopeptide (Lys-Gly) (interchain with G-Cter in ubiquitin); alternate. Lys-692 is covalently cross-linked (Glycyl lysine isopeptide (Lys-Gly) (interchain with G-Cter in ubiquitin)). An N6-acetyllysine; alternate modification is found at Lys-702. Lys-702 participates in a covalent cross-link: Glycyl lysine isopeptide (Lys-Gly) (interchain with G-Cter in ubiquitin); alternate. Tyr-711 is modified (phosphotyrosine). Phosphoserine; by CK1 and PDPK1 is present on Ser-713. The tract at residues 715–734 (VVSGDTSPRHLSNVSSTGSI) is disordered. The residue at position 717 (Ser-717) is a Phosphoserine; alternate. Ser-717 carries O-linked (GlcNAc) serine; alternate glycosylation. The span at 718-733 (GDTSPRHLSNVSSTGS) shows a compositional bias: polar residues. Thr-720 carries the phosphothreonine modification. Ser-721 is subject to Phosphoserine; by CK1 and PDPK1. Ser-726 is modified (phosphoserine). A Phosphoserine; by CaMK2 and TTBK1 modification is found at Ser-733. The residue at position 739 (Ser-739) is a Phosphoserine; by PDPK1 and TTBK1. Thr-744 is modified (phosphothreonine; by TTBK1).

As to quaternary structure, interacts with MARK1, MARK2, MARK3 and MARK4. Interacts with PSMC2 through SQSTM1. Interacts with SQSTM1 when polyubiquitinated. Interacts with FKBP4. Binds to CSNK1D. Interacts with SGK1. Interacts with EPM2A; the interaction dephosphorylates MAPT at Ser-396. Interacts with PIN1. Interacts with LRRK2. Interacts with LRP1, leading to endocytosis; this interaction is reduced in the presence of LRPAP1/RAP. In terms of processing, phosphorylation at serine and threonine residues in S-P or T-P motifs by proline-directed protein kinases (PDPK1, CDK1, CDK5, GSK3, MAPK) (only 2-3 sites per protein in interphase, seven-fold increase in mitosis, and in the form associated with paired helical filaments (PHF-tau)), and at serine residues in K-X-G-S motifs by MAP/microtubule affinity-regulating kinase (MARK1, MARK2, MARK3 or MARK4), causing detachment from microtubules, and their disassembly. Phosphorylation decreases with age. Phosphorylation within tau/MAP's repeat domain or in flanking regions seems to reduce tau/MAP's interaction with, respectively, microtubules or plasma membrane components. Phosphorylation on Ser-610, Ser-622, Ser-641 and Ser-673 in several isoforms during mitosis. Phosphorylation at Ser-548 by GSK3B reduces ability to bind and stabilize microtubules. Phosphorylation at Ser-579 by BRSK1 and BRSK2 in neurons affects ability to bind microtubules and plays a role in neuron polarization. Phosphorylated at Ser-554, Ser-579, Ser-602, Ser-606 and Ser-669 by PHK. Phosphorylation at Ser-214 by SGK1 mediates microtubule depolymerization and neurite formation in hippocampal neurons. There is a reciprocal down-regulation of phosphorylation and O-GlcNAcylation. Phosphorylation on Ser-717 completely abolishes the O-GlcNAcylation on this site, while phosphorylation on Ser-713 and Ser-721 reduces glycosylation by a factor of 2 and 4 respectively. Phosphorylation on Ser-721 is reduced by about 41.5% by GlcNAcylation on Ser-717. Dephosphorylated at several serine and threonine residues by the serine/threonine phosphatase PPP5C. Post-translationally, polyubiquitinated. Requires functional TRAF6 and may provoke SQSTM1-dependent degradation by the proteasome. PHF-tau can be modified by three different forms of polyubiquitination. 'Lys-48'-linked polyubiquitination is the major form, 'Lys-6'-linked and 'Lys-11'-linked polyubiquitination also occur. O-glycosylated. O-GlcNAcylation content is around 8.2%. There is reciprocal down-regulation of phosphorylation and O-GlcNAcylation. Phosphorylation on Ser-717 completely abolishes the O-GlcNAcylation on this site, while phosphorylation on Ser-713 and Ser-721 reduces O-GlcNAcylation by a factor of 2 and 4 respectively. O-GlcNAcylation on Ser-717 decreases the phosphorylation on Ser-721 by about 41.5%. In terms of processing, glycation of PHF-tau, but not normal brain TAU/MAPT. Glycation is a non-enzymatic post-translational modification that involves a covalent linkage between a sugar and an amino group of a protein molecule forming ketoamine. Subsequent oxidation, fragmentation and/or cross-linking of ketoamine leads to the production of advanced glycation endproducts (AGES). Glycation may play a role in stabilizing PHF aggregation leading to tangle formation in AD. In terms of tissue distribution, expressed in neurons. Isoform PNS-tau is expressed in the peripheral nervous system while the others are expressed in the central nervous system.

It localises to the cytoplasm. The protein resides in the cytosol. The protein localises to the cell membrane. It is found in the cytoskeleton. Its subcellular location is the cell projection. It localises to the axon. The protein resides in the dendrite. The protein localises to the secreted. Promotes microtubule assembly and stability, and might be involved in the establishment and maintenance of neuronal polarity. The C-terminus binds axonal microtubules while the N-terminus binds neural plasma membrane components, suggesting that tau functions as a linker protein between both. Axonal polarity is predetermined by TAU/MAPT localization (in the neuronal cell) in the domain of the cell body defined by the centrosome. The short isoforms allow plasticity of the cytoskeleton whereas the longer isoforms may preferentially play a role in its stabilization. The polypeptide is Microtubule-associated protein tau (Homo sapiens (Human)).